A 458-amino-acid chain; its full sequence is SH2 domain-containing protein 7 (458 aa).

The region spanning 51–142 (WFHGFITRKQ…PFGETLAAAC (92 aa)) is the SH2 domain. Disordered stretches follow at residues 204-235 (RSVSDEVSAEVPTRVPPIPRRSPSLLDESPAG) and 267-326 (AGSL…TLGS). Residues 278-288 (PSGKLSDEDQN) show a composition bias toward basic and acidic residues. The segment covering 304 to 326 (QGSTMPYTSLGFSLPPSSETLGS) has biased composition (polar residues).

The sequence is that of SH2 domain-containing protein 7 (Sh2d7) from Mus musculus (Mouse).